The primary structure comprises 261 residues: Imidazole glycerol phosphate synthase subunit HisF (261 aa).

Catalysis depends on residues Asp-16 and Asp-135.

The protein belongs to the HisA/HisF family. In terms of assembly, heterodimer of HisH and HisF.

The protein resides in the cytoplasm. It carries out the reaction 5-[(5-phospho-1-deoxy-D-ribulos-1-ylimino)methylamino]-1-(5-phospho-beta-D-ribosyl)imidazole-4-carboxamide + L-glutamine = D-erythro-1-(imidazol-4-yl)glycerol 3-phosphate + 5-amino-1-(5-phospho-beta-D-ribosyl)imidazole-4-carboxamide + L-glutamate + H(+). It participates in amino-acid biosynthesis; L-histidine biosynthesis; L-histidine from 5-phospho-alpha-D-ribose 1-diphosphate: step 5/9. In terms of biological role, IGPS catalyzes the conversion of PRFAR and glutamine to IGP, AICAR and glutamate. The HisF subunit catalyzes the cyclization activity that produces IGP and AICAR from PRFAR using the ammonia provided by the HisH subunit. The protein is Imidazole glycerol phosphate synthase subunit HisF of Mycolicibacterium vanbaalenii (strain DSM 7251 / JCM 13017 / BCRC 16820 / KCTC 9966 / NRRL B-24157 / PYR-1) (Mycobacterium vanbaalenii).